The chain runs to 453 residues: Flavonol-3-O-rhamnosyltransferase (453 aa).

H24 functions as the Proton acceptor in the catalytic mechanism. An an anthocyanidin-binding site is contributed by H24. The active-site Charge relay is the D119. An an anthocyanidin-binding site is contributed by H150. The UDP-beta-L-rhamnose site is built by T280, A333, H350, N354, S355, and E358. A373 lines the an anthocyanidin pocket.

This sequence belongs to the UDP-glycosyltransferase family. Expressed in leaves, flowers, siliques, and stems. Expressed in the shoot apex.

It carries out the reaction kaempferol + UDP-beta-L-rhamnose = kaempferol 3-O-alpha-L-rhamnoside + UDP + H(+). The catalysed reaction is UDP-beta-L-rhamnose + quercetin = quercitrin + UDP + H(+). The protein operates within flavonoid metabolism. Flavonol 3-O-rhamnosyltransferase that catalyzes the transfer of rhamnose from UDP-rhamnose to the 3-OH position of kaempferol and quercetin. Possesses low quercetin 3-O-glucosyltransferase activity in vitro. This chain is Flavonol-3-O-rhamnosyltransferase, found in Arabidopsis thaliana (Mouse-ear cress).